The primary structure comprises 222 residues: MTDYARYIDHTLLAANATEQQIIALCDEAVAHRFYAVCVNSGYVPLVAEKLKGTDVQVCSVIGFPLGAGLTASKAFEAKAAIDAGAQEIDMVINVGWLKSGKIAAVQADIQAVREVCAAIPLKVILETCLLDDEQIVLVCEMCRQLDVAFVKTSTGFSTGGAREEHVRLMRNTVGSEMGVKASGAVRDRQTAQRMIEAGATRIGTSSGVAIVSGEAAAAGNY.

Asp-90 acts as the Proton donor/acceptor in catalysis. Lys-152 (schiff-base intermediate with acetaldehyde) is an active-site residue. Lys-181 (proton donor/acceptor) is an active-site residue.

Belongs to the DeoC/FbaB aldolase family. DeoC type 1 subfamily.

The protein resides in the cytoplasm. It catalyses the reaction 2-deoxy-D-ribose 5-phosphate = D-glyceraldehyde 3-phosphate + acetaldehyde. Its pathway is carbohydrate degradation; 2-deoxy-D-ribose 1-phosphate degradation; D-glyceraldehyde 3-phosphate and acetaldehyde from 2-deoxy-alpha-D-ribose 1-phosphate: step 2/2. Catalyzes a reversible aldol reaction between acetaldehyde and D-glyceraldehyde 3-phosphate to generate 2-deoxy-D-ribose 5-phosphate. This Pectobacterium carotovorum subsp. carotovorum (strain PC1) protein is Deoxyribose-phosphate aldolase.